The primary structure comprises 186 residues: Alpha/beta-gliadin clone PTO-A10 (186 aa).

Residues 1–20 (PQPQPQYSQPQQPISQQQQQ) are disordered.

Belongs to the gliadin/glutenin family. Substrate of transglutaminase.

In terms of biological role, gliadin is the major seed storage protein in wheat. The chain is Alpha/beta-gliadin clone PTO-A10 from Triticum aestivum (Wheat).